A 400-amino-acid polypeptide reads, in one-letter code: Queuine tRNA-ribosyltransferase catalytic subunit (400 aa).

The active-site Proton acceptor is D89. Substrate is bound by residues 89–93, D143, Q185, and G212; that span reads DSGGF. The tract at residues 243–249 is RNA binding; the sequence is GVGFPVD. D262 serves as the catalytic Nucleophile. The tract at residues 267–271 is RNA binding; important for wobble base 34 recognition; the sequence is TRTAR. The Zn(2+) site is built by C301, C303, C306, and H331.

Belongs to the queuine tRNA-ribosyltransferase family. As to quaternary structure, heterodimer of a catalytic subunit and an accessory subunit. Requires Zn(2+) as cofactor.

The protein resides in the cytoplasm. The catalysed reaction is guanosine(34) in tRNA + queuine = queuosine(34) in tRNA + guanine. Catalytic subunit of the queuine tRNA-ribosyltransferase (TGT) that catalyzes the base-exchange of a guanine (G) residue with queuine (Q) at position 34 (anticodon wobble position) in tRNAs with GU(N) anticodons (tRNA-Asp, -Asn, -His and -Tyr), resulting in the hypermodified nucleoside queuosine (7-(((4,5-cis-dihydroxy-2-cyclopenten-1-yl)amino)methyl)-7-deazaguanosine). Catalysis occurs through a double-displacement mechanism. The nucleophile active site attacks the C1' of nucleotide 34 to detach the guanine base from the RNA, forming a covalent enzyme-RNA intermediate. The proton acceptor active site deprotonates the incoming queuine, allowing a nucleophilic attack on the C1' of the ribose to form the product. This chain is Queuine tRNA-ribosyltransferase catalytic subunit, found in Caenorhabditis elegans.